The chain runs to 353 residues: Methionine import ATP-binding protein MetN (353 aa).

One can recognise an ABC transporter domain in the interval 6-249 (LKNVDVDFPQ…PKQELTKKFV (244 aa)). Residue 41 to 48 (GFSGAGKS) participates in ATP binding.

Belongs to the ABC transporter superfamily. Methionine importer (TC 3.A.1.24) family. The complex is composed of two ATP-binding proteins (MetN), two transmembrane proteins (MetI) and a solute-binding protein (MetQ).

Its subcellular location is the cell membrane. The enzyme catalyses L-methionine(out) + ATP + H2O = L-methionine(in) + ADP + phosphate + H(+). The catalysed reaction is D-methionine(out) + ATP + H2O = D-methionine(in) + ADP + phosphate + H(+). In terms of biological role, part of the ABC transporter complex MetNIQ involved in methionine import. Responsible for energy coupling to the transport system. In Lactobacillus acidophilus (strain ATCC 700396 / NCK56 / N2 / NCFM), this protein is Methionine import ATP-binding protein MetN.